The chain runs to 281 residues: Phosphoglycerate mutase-like protein AT74H (281 aa).

H17 acts as the Tele-phosphohistidine intermediate in catalysis. E109 acts as the Proton donor/acceptor in catalysis.

The protein belongs to the phosphoglycerate mutase family.

May play a role in carbohydrates metabolism. The sequence is that of Phosphoglycerate mutase-like protein AT74H from Arabidopsis thaliana (Mouse-ear cress).